A 407-amino-acid chain; its full sequence is Phosphoglycerate kinase (407 aa).

Substrate-binding positions include 24-26 (DFN), arginine 40, 63-66 (HLGR), arginine 121, and arginine 154. ATP is bound by residues lysine 205, glutamate 337, and 363–366 (GGDS).

This sequence belongs to the phosphoglycerate kinase family. As to quaternary structure, monomer.

The protein localises to the cytoplasm. It carries out the reaction (2R)-3-phosphoglycerate + ATP = (2R)-3-phospho-glyceroyl phosphate + ADP. The protein operates within carbohydrate degradation; glycolysis; pyruvate from D-glyceraldehyde 3-phosphate: step 2/5. The protein is Phosphoglycerate kinase of Gloeobacter violaceus (strain ATCC 29082 / PCC 7421).